The chain runs to 441 residues: Chromatin structure-remodeling complex subunit SFH1 (441 aa).

A compositionally biased stretch (acidic residues) spans 124–137; sequence DFDANDFEDDDDDD. Disordered regions lie at residues 124 to 183 and 383 to 407; these read DFDA…AAPP and EMTP…KRES. Composition is skewed to basic and acidic residues over residues 138 to 147 and 155 to 166; these read QSQRESRDGS and DGTKKEEQDKFA.

It belongs to the SNF5 family.

The protein localises to the nucleus. Part of the chromatin structure-remodeling complex (RSC) which is involved in transcription regulation and nucleosome positioning. RSC is responsible for the transfer of a histone octamer from a nucleosome core particle to naked DNA. The reaction requires ATP and involves an activated RSC-nucleosome intermediate. Remodeling reaction also involves DNA translocation, DNA twist and conformational change. As a reconfigurer of centromeric and flanking nucleosomes, RSC complex is required both for proper kinetochore function in chromosome segregation and, via a PKC1-dependent signaling pathway, for organization of the cellular cytoskeleton. This subunit is essential for mitotic growth and required for cell cycle progression. The polypeptide is Chromatin structure-remodeling complex subunit SFH1 (SFH1) (Yarrowia lipolytica (strain CLIB 122 / E 150) (Yeast)).